Reading from the N-terminus, the 278-residue chain is Undecaprenyl-diphosphatase (278 aa).

The next 8 membrane-spanning stretches (helical) occupy residues 2 to 22 (ALVEIFKAILLGIVEGITEWL), 44 to 64 (AFMEMFFVVIQLGAILAVVLL), 85 to 105 (IEMWFKIIVSCIPAGVIGLLW), 113 to 133 (FYNYQTVAVMLIIFGILFIVI), 150 to 170 (ITYTTAFMIGIFQLIAAIFPG), 189 to 209 (TVAAEFTFFLAIPVMFGASAL), 223 to 243 (LMILLIGMVVAFIVSVISIKF), and 253 to 273 (FKIFGWYRIILGVIVLLYFSA).

This sequence belongs to the UppP family.

It localises to the cell membrane. The enzyme catalyses di-trans,octa-cis-undecaprenyl diphosphate + H2O = di-trans,octa-cis-undecaprenyl phosphate + phosphate + H(+). Catalyzes the dephosphorylation of undecaprenyl diphosphate (UPP). Confers resistance to bacitracin. This Desulfitobacterium hafniense (strain DSM 10664 / DCB-2) protein is Undecaprenyl-diphosphatase.